The following is a 113-amino-acid chain: 4-cresol dehydrogenase [hydroxylating] cytochrome c subunit (113 aa).

Residues 1 to 33 (MTFPFSGAAVKRMLVTGVVLPFGLLVAAGQAQA) form the signal peptide. Positions 48, 51, 52, and 83 each coordinate heme c.

As to quaternary structure, tetramer of two cytochrome subunits and two flavoprotein subunits. Binds 1 heme c group covalently per subunit.

It functions in the pathway aromatic compound metabolism; p-cresol degradation. Functionally, this is the heme-containing component of the p-cresol methylhydroxylase. It accepts electrons from the flavoprotein subunit. This Pseudomonas putida (Arthrobacter siderocapsulatus) protein is 4-cresol dehydrogenase [hydroxylating] cytochrome c subunit (pchC).